Here is a 263-residue protein sequence, read N- to C-terminus: Phosphatidylglycerol--prolipoprotein diacylglyceryl transferase (263 aa).

3 consecutive transmembrane segments (helical) span residues 17–37, 56–76, and 88–108; these read LSVR…IFLG, LLFY…VLFY, and IFAV…VLVA. R139 provides a ligand contact to a 1,2-diacyl-sn-glycero-3-phospho-(1'-sn-glycerol). The next 2 membrane-spanning stretches (helical) occupy residues 176–196 and 236–256; these read QLYH…WFTA and ISMG…MVVF.

It belongs to the Lgt family.

The protein resides in the cell inner membrane. It catalyses the reaction L-cysteinyl-[prolipoprotein] + a 1,2-diacyl-sn-glycero-3-phospho-(1'-sn-glycerol) = an S-1,2-diacyl-sn-glyceryl-L-cysteinyl-[prolipoprotein] + sn-glycerol 1-phosphate + H(+). Its pathway is protein modification; lipoprotein biosynthesis (diacylglyceryl transfer). Functionally, catalyzes the transfer of the diacylglyceryl group from phosphatidylglycerol to the sulfhydryl group of the N-terminal cysteine of a prolipoprotein, the first step in the formation of mature lipoproteins. This Dechloromonas aromatica (strain RCB) protein is Phosphatidylglycerol--prolipoprotein diacylglyceryl transferase.